The chain runs to 148 residues: SsrA-binding protein (148 aa).

The tract at residues 128–148 is disordered; it reads ESIAKKDQERNLKREFKNNNR.

Belongs to the SmpB family.

The protein localises to the cytoplasm. In terms of biological role, required for rescue of stalled ribosomes mediated by trans-translation. Binds to transfer-messenger RNA (tmRNA), required for stable association of tmRNA with ribosomes. tmRNA and SmpB together mimic tRNA shape, replacing the anticodon stem-loop with SmpB. tmRNA is encoded by the ssrA gene; the 2 termini fold to resemble tRNA(Ala) and it encodes a 'tag peptide', a short internal open reading frame. During trans-translation Ala-aminoacylated tmRNA acts like a tRNA, entering the A-site of stalled ribosomes, displacing the stalled mRNA. The ribosome then switches to translate the ORF on the tmRNA; the nascent peptide is terminated with the 'tag peptide' encoded by the tmRNA and targeted for degradation. The ribosome is freed to recommence translation, which seems to be the essential function of trans-translation. This Fusobacterium nucleatum subsp. nucleatum (strain ATCC 25586 / DSM 15643 / BCRC 10681 / CIP 101130 / JCM 8532 / KCTC 2640 / LMG 13131 / VPI 4355) protein is SsrA-binding protein.